The primary structure comprises 132 residues: MAEQFSMLRSELTELLLVAVGAVPGALLRWQLAHHLGDQNLLVNVLGAALLGLLAGRPVAPRRQLLVGIGFCGSLTTFSSWMLAAMKHVSAGDWPAALGLIGLTLGLGLGAAALGFSLGRRLRPPEQPRSEP.

Transmembrane regions (helical) follow at residues 12 to 32, 41 to 61, 65 to 85, and 96 to 116; these read LTEL…RWQL, LLVN…PVAP, LLVG…MLAA, and AALG…ALGF. Residues Gly73 and Thr76 each coordinate Na(+).

The protein belongs to the fluoride channel Fluc/FEX (TC 1.A.43) family.

The protein resides in the cell inner membrane. It catalyses the reaction fluoride(in) = fluoride(out). With respect to regulation, na(+) is not transported, but it plays an essential structural role and its presence is essential for fluoride channel function. In terms of biological role, fluoride-specific ion channel. Important for reducing fluoride concentration in the cell, thus reducing its toxicity. The protein is Fluoride-specific ion channel FluC 2 of Parasynechococcus marenigrum (strain WH8102).